The following is a 30-amino-acid chain: Dermaseptin-S3 (30 aa).

This sequence belongs to the frog skin active peptide (FSAP) family. Dermaseptin subfamily. Monomer and oligomer. Forms aggregates in aqueous environments. As to expression, expressed by the skin glands.

It is found in the secreted. In terms of biological role, potent antimicrobial peptide with activity against bacteria and protozoa. Also has activity against fungi. Probably acts by disturbing membrane functions with its amphipathic structure. Binds to healthy erythrocytes (this binding is receptor independent), but has very weak hemolytic activity. Does not bind to P.falciparum infected erythrocytes, but accumulates within the parasite. Kills the parasite, but has no hemolytic activity on the host cell. This Phyllomedusa sauvagei (Sauvage's leaf frog) protein is Dermaseptin-S3.